Reading from the N-terminus, the 111-residue chain is Small ribosomal subunit protein bS16 (111 aa).

The protein belongs to the bacterial ribosomal protein bS16 family.

This chain is Small ribosomal subunit protein bS16, found in Rickettsia prowazekii (strain Madrid E).